The sequence spans 601 residues: Specifically androgen-regulated gene protein (601 aa).

3 disordered regions span residues 1 to 41, 56 to 538, and 551 to 601; these read MPER…SSYD, ETIG…TGKD, and EQEQ…LLKE. Residues 20–39 are compositionally biased toward low complexity; it reads GSCDSMMSSTSTRSGSSDSS. Over residues 100 to 118 the composition is skewed to polar residues; the sequence is TITQQGRTPRTVTESSSSH. Phosphoserine is present on residues Ser-131 and Ser-133. A compositionally biased stretch (polar residues) spans 142-157; sequence RSQNFRKSTTQASSHN. Over residues 174 to 190 the composition is skewed to low complexity; that stretch reads SQSSQPRQAPASPQEAA. The span at 203–213 shows a compositional bias: basic and acidic residues; sequence AFRDTQPEQCR. Composition is skewed to polar residues over residues 224–236 and 307–316; these read QGHTPQLHTPSSS and LKSSRSSFHS. Over residues 342-352 the composition is skewed to basic and acidic residues; the sequence is EQRKARKEALE. Low complexity predominate over residues 384-414; it reads LSPAPGLAQPAAPAQASAAIPAAGKALAQAP. Pro residues predominate over residues 415–429; the sequence is APAPGPAQGPLPMKS. The segment covering 464-485 has biased composition (polar residues); that stretch reads LTLQESNTPGLRQMNFKSNTLE. A Phosphoserine modification is found at Ser-519. Positions 585-601 are enriched in basic and acidic residues; the sequence is PNEHRREALKKLGLLKE.

Belongs to the SARG family. Highly expressed in prostate.

It is found in the cytoplasm. Its function is as follows. Putative androgen-specific receptor. The sequence is that of Specifically androgen-regulated gene protein (SARG) from Homo sapiens (Human).